Reading from the N-terminus, the 205-residue chain is UPF0111 protein YkaA (205 aa).

It belongs to the UPF0111 family.

The polypeptide is UPF0111 protein YkaA (ykaA) (Bacillus subtilis (strain 168)).